A 550-amino-acid polypeptide reads, in one-letter code: Warthog protein 8 (550 aa).

The N-terminal stretch at 1–19 (MNYLLLVSGLLSVWQPVFG) is a signal peptide.

It belongs to the hedgehog family. Post-translationally, the C-terminal domain displays an autoproteolysis activity.

It localises to the secreted. It is found in the cell surface. The protein localises to the cell membrane. The protein resides in the extracellular space. Functionally, intercellular signal essential for a variety of patterning events during development. In Caenorhabditis elegans, this protein is Warthog protein 8 (wrt-8).